Consider the following 347-residue polypeptide: Isopentenyl-diphosphate delta-isomerase (347 aa).

A disordered region spans residues 1–31; sequence MDESNSQFEKRKRDHIRIALDPRSQTDGQNG. The span at 8-20 shows a compositional bias: basic and acidic residues; it reads FEKRKRDHIRIAL. Substrate is bound at residue 11–12; the sequence is RK. FMN-binding positions include serine 72, 73 to 75, serine 103, and asparagine 132; that span reads SMT. Residue 103 to 105 participates in substrate binding; sequence SQR. Position 166 (glutamine 166) interacts with substrate. Glutamate 167 is a binding site for Mg(2+). FMN-binding positions include lysine 198, serine 223, threonine 228, 279 to 281, and 300 to 301; these read GVR and AK.

The protein belongs to the IPP isomerase type 2 family. In terms of assembly, homooctamer. Dimer of tetramers. Requires FMN as cofactor. It depends on NADPH as a cofactor. Mg(2+) serves as cofactor.

The protein localises to the cytoplasm. The enzyme catalyses isopentenyl diphosphate = dimethylallyl diphosphate. Its function is as follows. Involved in the biosynthesis of isoprenoids. Catalyzes the 1,3-allylic rearrangement of the homoallylic substrate isopentenyl (IPP) to its allylic isomer, dimethylallyl diphosphate (DMAPP). This chain is Isopentenyl-diphosphate delta-isomerase, found in Bdellovibrio bacteriovorus (strain ATCC 15356 / DSM 50701 / NCIMB 9529 / HD100).